The primary structure comprises 190 residues: Hypoxanthine/guanine phosphoribosyltransferase (190 aa).

This sequence belongs to the purine/pyrimidine phosphoribosyltransferase family. Archaeal HPRT subfamily. In terms of assembly, homodimer.

It is found in the cytoplasm. The catalysed reaction is IMP + diphosphate = hypoxanthine + 5-phospho-alpha-D-ribose 1-diphosphate. The enzyme catalyses GMP + diphosphate = guanine + 5-phospho-alpha-D-ribose 1-diphosphate. It participates in purine metabolism; IMP biosynthesis via salvage pathway; IMP from hypoxanthine: step 1/1. Its function is as follows. Catalyzes a salvage reaction resulting in the formation of IMP that is energically less costly than de novo synthesis. In Methanohalobium evestigatum (strain ATCC BAA-1072 / DSM 3721 / NBRC 107634 / OCM 161 / Z-7303), this protein is Hypoxanthine/guanine phosphoribosyltransferase.